The sequence spans 420 residues: MIOREX complex component 9 (420 aa).

Transmembrane regions (helical) follow at residues 125–145 (VYKV…TFIL) and 149–169 (IVVI…FFFF).

Associates with the mitochondrial ribosome.

The protein resides in the mitochondrion. It localises to the mitochondrion membrane. In terms of biological role, component of MIOREX complexes, large expressome-like assemblies of ribosomes with factors involved in all the steps of post-transcriptional gene expression. This Saccharomyces cerevisiae (strain ATCC 204508 / S288c) (Baker's yeast) protein is MIOREX complex component 9.